Consider the following 1345-residue polypeptide: Probable membrane antigen 75 (1345 aa).

It is found in the virion tegument. This Equine herpesvirus 2 (strain 86/87) (EHV-2) protein is Probable membrane antigen 75 (75).